A 572-amino-acid polypeptide reads, in one-letter code: Adenine deaminase (572 aa).

This sequence belongs to the metallo-dependent hydrolases superfamily. Adenine deaminase family. Requires Mn(2+) as cofactor.

The catalysed reaction is adenine + H2O + H(+) = hypoxanthine + NH4(+). The polypeptide is Adenine deaminase (Clostridium perfringens (strain 13 / Type A)).